The sequence spans 647 residues: DNA mismatch repair protein MutL (647 aa).

Belongs to the DNA mismatch repair MutL/HexB family.

This protein is involved in the repair of mismatches in DNA. It is required for dam-dependent methyl-directed DNA mismatch repair. May act as a 'molecular matchmaker', a protein that promotes the formation of a stable complex between two or more DNA-binding proteins in an ATP-dependent manner without itself being part of a final effector complex. This is DNA mismatch repair protein MutL from Bacillus cereus (strain ATCC 10987 / NRS 248).